The primary structure comprises 556 residues: MAQQQRMQGQPMIIMGDDAQRVKDRDAQEHNISAARAVADAVRSTLGPKGMDKMLVSSMGDVTVTNDGVTILQEMDIDNPTAEMIVEVAETQEDEAGDGTTTAVAIAGELLKNAEDLLERDIHPTAIIKGYNLAAEQAREEVDNVAVDVDPDDKDLIRSVAETSMTGKGAELDKELLSSIIYDAVNQVAVETNDGGIVVDAANINIETQTGHGVNESQLLRGAAISKDPVHDQMPAAVEDADVLLLNEAIEVEEAEADTSVNIESPDQLQSFLDQEEKQLKEKVQQIADTGANVVFCQKGIDDMAQHYLAKEGILAVRRTKKSDIEFLTNVLDASVVTDLDAASEADVVAGSVTRDSDDELFYVEGESEQAHGVTLLLRGSTDHVVDELERGVSDALDVSAQTLSDGRVLPGGGATEVEVASRLRDFADSVSGREQLAVEAFADSLELVPRVLAENAGLDSIDTLVDLRSAHENDDDEHIGLNVLSGDLEDTFEAGVVEPAHAKEQAVTSASEAANLVLKIDDIISAGDLSTDKGDDDGGAGGMGGGMGGGMGGMM.

Positions 530-556 (LSTDKGDDDGGAGGMGGGMGGGMGGMM) are disordered. Residues 540–556 (GAGGMGGGMGGGMGGMM) are compositionally biased toward gly residues.

The protein belongs to the TCP-1 chaperonin family. As to quaternary structure, forms an oligomeric complex of eight-membered rings.

Functionally, molecular chaperone; binds unfolded polypeptides in vitro, and has a weak ATPase activity. The protein is Thermosome subunit beta (thsB) of Halobacterium salinarum (strain ATCC 700922 / JCM 11081 / NRC-1) (Halobacterium halobium).